A 158-amino-acid polypeptide reads, in one-letter code: uncharacterized protein (158 aa).

The segment covering 1-21 has biased composition (polar residues); the sequence is MPHTGSQHTLQATPKTAQHTG. Disordered stretches follow at residues 1–89 and 107–158; these read MPHT…RVEG and EEEK…DAKT. Composition is skewed to basic and acidic residues over residues 51–68 and 107–127; these read HTEGCHTQKTRMSADKAG and EEEKASGEARGEDVGSSRESR. A compositionally biased stretch (polar residues) spans 128–137; the sequence is QGTAHKSTCM. Basic and acidic residues predominate over residues 149 to 158; sequence EIGKVEDAKT.

This is an uncharacterized protein from Encephalitozoon cuniculi (strain GB-M1) (Microsporidian parasite).